The chain runs to 547 residues: Chaperonin GroEL 1 (547 aa).

ATP contacts are provided by residues 30–33 (TLGP), Lys51, 87–91 (DGTTT), Gly415, and Asp496.

The protein belongs to the chaperonin (HSP60) family. Forms a cylinder of 14 subunits composed of two heptameric rings stacked back-to-back. Interacts with the co-chaperonin GroES.

It localises to the cytoplasm. The enzyme catalyses ATP + H2O + a folded polypeptide = ADP + phosphate + an unfolded polypeptide.. Functionally, together with its co-chaperonin GroES, plays an essential role in assisting protein folding. The GroEL-GroES system forms a nano-cage that allows encapsulation of the non-native substrate proteins and provides a physical environment optimized to promote and accelerate protein folding. The chain is Chaperonin GroEL 1 from Rhodopseudomonas palustris (strain BisB5).